The primary structure comprises 518 residues: Ell-associated factor Eaf (518 aa).

Polar residues-rich tracts occupy residues 119-128 (KTRSEMTNKP) and 163-182 (ENSTMRITSKTKVSTGSRRN). Disordered stretches follow at residues 119-216 (KTRS…PAWH) and 241-518 (ALHN…DDDD). Residue Ser192 is modified to Phosphoserine. Composition is skewed to polar residues over residues 253–265 (ANISGSSTGSSVG) and 274–284 (MGKQRQASSQG). Residues 289–342 (QQQTQRSSPPMQQQQQQQNYGRGGANNNYAQQLHQQQQQQQQQQLQQQQQQMQQ) show a composition bias toward low complexity. The span at 343-355 (RASFSHSNHSNSM) shows a compositional bias: polar residues. A compositionally biased stretch (low complexity) spans 368–377 (AAQSMAQAAA). Acidic residues predominate over residues 397–412 (ESSDSDSGSDSDDSTE). 3 stretches are compositionally biased toward low complexity: residues 418-428 (HQQQQPPGQLS), 463-476 (QQQQQQHQQQQQQQ), and 500-518 (NDLLQNDLQLSSNSSDDDD).

The protein belongs to the EAF family.

It localises to the nucleus. Functionally, promotes transcriptional elongation by Su(Tpl)/ELL. Essential for development. The protein is Ell-associated factor Eaf of Drosophila mojavensis (Fruit fly).